The chain runs to 373 residues: Meiosis-specific kinetochore protein (373 aa).

Disordered regions lie at residues 1–91 (MWPL…QDEK) and 250–276 (STPEKTKKKKTNSSTPGKKNRGLLTST). Basic and acidic residues predominate over residues 77–91 (SLQENRSSEDTQDEK). A POLO box domain (PBD)-binding motif is present at residues 275-277 (STP). Residues 332–335 (EICC) are required for localization to kinetochores.

In terms of assembly, interacts with CENPC. Interacts with PLK1; required for recruitment of PLK1 at kinetochores.

It is found in the chromosome. The protein localises to the centromere. Its subcellular location is the kinetochore. Functionally, key regulator of kinetochore function during meiosis I: required both for mono-orientation of kinetochores on sister chromosomes and protection of centromeric cohesin from separase-mediated cleavage. Acts by facilitating kinetochore mono-orientation during meiosis I, when kinetochores on sister chromosomes face the same direction and are thus captured and pulled by spindle fibers from the same pole. Also required to prevent cleavage of cohesin at centromeres during meiosis I, possibly by acting as a regulator of the shugoshin-dependent protection pathway. Acts in collaboration with PLK1: required for PLK1 enrichment to kinetochores. Not required during meiosis II or mitosis. This is Meiosis-specific kinetochore protein from Homo sapiens (Human).